A 644-amino-acid polypeptide reads, in one-letter code: Threonine--tRNA ligase (644 aa).

The 62-residue stretch at 3–64 (EMIRITFPDG…QEDGSISIIT (62 aa)) folds into the TGS domain. The tract at residues 245–542 (DHRKLGKELE…LIEEYKGAFP (298 aa)) is catalytic. Zn(2+) is bound by residues C338, H389, and H519.

The protein belongs to the class-II aminoacyl-tRNA synthetase family. Homodimer. Zn(2+) serves as cofactor.

The protein localises to the cytoplasm. It catalyses the reaction tRNA(Thr) + L-threonine + ATP = L-threonyl-tRNA(Thr) + AMP + diphosphate + H(+). In terms of biological role, catalyzes the attachment of threonine to tRNA(Thr) in a two-step reaction: L-threonine is first activated by ATP to form Thr-AMP and then transferred to the acceptor end of tRNA(Thr). Also edits incorrectly charged L-seryl-tRNA(Thr). The polypeptide is Threonine--tRNA ligase (Geobacillus sp. (strain WCH70)).